The chain runs to 149 residues: Secreted RxLR effector protein 17 (149 aa).

A signal peptide spans 1–24 (MRLFYFSAMSVIGLLARNNMVVVA). A RxLR-dEER motif is present at residues 52 to 78 (RSLRTREKDIQDSTVAKDDAIKVEEDR).

It belongs to the RxLR effector family.

Its subcellular location is the secreted. It localises to the host cytoplasm. The protein localises to the host nucleus. In terms of biological role, effector that acts as a broad suppressor of cell death to interrupt plant immunity. Inhibits cell death induced by cell death-inducing proteins, including the PAMP elicitor INF1 from P.infestans. The chain is Secreted RxLR effector protein 17 from Plasmopara viticola (Downy mildew of grapevine).